Consider the following 376-residue polypeptide: tRNA(Met) cytidine acetate ligase (376 aa).

ATP contacts are provided by residues 7–20 (IAEY…HYYQ), glycine 102, asparagine 160, and arginine 181.

The protein belongs to the TmcAL family.

The protein localises to the cytoplasm. The enzyme catalyses cytidine(34) in elongator tRNA(Met) + acetate + ATP = N(4)-acetylcytidine(34) in elongator tRNA(Met) + AMP + diphosphate. Functionally, catalyzes the formation of N(4)-acetylcytidine (ac(4)C) at the wobble position of elongator tRNA(Met), using acetate and ATP as substrates. First activates an acetate ion to form acetyladenylate (Ac-AMP) and then transfers the acetyl group to tRNA to form ac(4)C34. This is tRNA(Met) cytidine acetate ligase from Exiguobacterium sp. (strain ATCC BAA-1283 / AT1b).